Consider the following 126-residue polypeptide: Histone H2B type 1-P (126 aa).

Positions M1 to E36 are disordered. P2 carries the N-acetylproline modification. E3 is modified (ADP-ribosyl glutamic acid). K6 bears the N6-(2-hydroxyisobutyryl)lysine; alternate mark. K6 bears the N6-(beta-hydroxybutyryl)lysine; alternate mark. K6 is modified (N6-acetyllysine; alternate). K6 bears the N6-butyryllysine; alternate mark. K6 carries the post-translational modification N6-crotonyllysine; alternate. Residue K6 is modified to N6-lactoyllysine; alternate. A Glycyl lysine isopeptide (Lys-Gly) (interchain with G-Cter in SUMO2); alternate cross-link involves residue K6. Residue S7 is modified to ADP-ribosylserine. K12 carries the post-translational modification N6-(beta-hydroxybutyryl)lysine; alternate. Residues K12 and K13 each carry the N6-acetyllysine; alternate modification. N6-crotonyllysine; alternate is present on residues K12 and K13. K12 carries the post-translational modification N6-lactoyllysine; alternate. K13 is subject to N6-(2-hydroxyisobutyryl)lysine; alternate. Position 15 is a phosphoserine; by STK4/MST1 (S15). Residues K16, K17, K21, and K24 each carry the N6-acetyllysine; alternate modification. N6-crotonyllysine; alternate is present on residues K16, K17, K21, and K24. 4 positions are modified to N6-lactoyllysine; alternate: K16, K17, K21, and K24. N6-glutaryllysine; alternate is present on K17. N6-(2-hydroxyisobutyryl)lysine; alternate occurs at positions 21 and 24. N6-(beta-hydroxybutyryl)lysine; alternate is present on K21. K21 carries the post-translational modification N6-butyryllysine; alternate. K21 is covalently cross-linked (Glycyl lysine isopeptide (Lys-Gly) (interchain with G-Cter in SUMO2); alternate). Residue K25 is modified to N6-(2-hydroxyisobutyryl)lysine. The residue at position 35 (K35) is an N6-(2-hydroxyisobutyryl)lysine; alternate. K35 is modified (N6-(beta-hydroxybutyryl)lysine; alternate). K35 is modified (N6-crotonyllysine; alternate). At K35 the chain carries N6-glutaryllysine; alternate. Position 35 is an N6-succinyllysine; alternate (K35). K35 participates in a covalent cross-link: Glycyl lysine isopeptide (Lys-Gly) (interchain with G-Cter in ubiquitin); alternate. Residue E36 is modified to PolyADP-ribosyl glutamic acid. Phosphoserine; by AMPK is present on S37. An N6-(2-hydroxyisobutyryl)lysine; alternate mark is found at K44, K47, and K58. K44 carries the N6-lactoyllysine; alternate modification. N6-glutaryllysine; alternate is present on residues K44 and K47. The residue at position 47 (K47) is an N6-methyllysine; alternate. At K58 the chain carries N6,N6-dimethyllysine; alternate. R80 bears the Dimethylated arginine mark. The residue at position 86 (K86) is an N6-(2-hydroxyisobutyryl)lysine; alternate. The residue at position 86 (K86) is an N6-acetyllysine; alternate. K86 carries the post-translational modification N6-lactoyllysine; alternate. The residue at position 86 (K86) is an N6,N6,N6-trimethyllysine; alternate. 2 positions are modified to omega-N-methylarginine: R87 and R93. K109 carries the N6-(2-hydroxyisobutyryl)lysine; alternate modification. Residue K109 is modified to N6-(beta-hydroxybutyryl)lysine; alternate. N6-lactoyllysine; alternate is present on K109. Residue K109 is modified to N6-glutaryllysine; alternate. K109 bears the N6-methyllysine; alternate mark. An O-linked (GlcNAc) serine glycan is attached at S113. The residue at position 116 (T116) is a Phosphothreonine. An N6-(2-hydroxyisobutyryl)lysine; alternate mark is found at K117 and K121. K117 is subject to N6-(beta-hydroxybutyryl)lysine; alternate. K117 and K121 each carry N6-lactoyllysine; alternate. 2 positions are modified to N6-glutaryllysine; alternate: K117 and K121. N6-succinyllysine; alternate occurs at positions 117 and 121. N6-methylated lysine; alternate is present on K117. A Glycyl lysine isopeptide (Lys-Gly) (interchain with G-Cter in ubiquitin); alternate cross-link involves residue K121.

The protein belongs to the histone H2B family. As to quaternary structure, the nucleosome is a histone octamer containing two molecules each of H2A, H2B, H3 and H4 assembled in one H3-H4 heterotetramer and two H2A-H2B heterodimers. The octamer wraps approximately 147 bp of DNA. Monoubiquitination at Lys-35 (H2BK34Ub) by the MSL1/MSL2 dimer is required for histone H3 'Lys-4' (H3K4me) and 'Lys-79' (H3K79me) methylation and transcription activation at specific gene loci, such as HOXA9 and MEIS1 loci. Similarly, monoubiquitination at Lys-121 (H2BK120Ub) by the RNF20/40 complex gives a specific tag for epigenetic transcriptional activation and is also prerequisite for histone H3 'Lys-4' and 'Lys-79' methylation. It also functions cooperatively with the FACT dimer to stimulate elongation by RNA polymerase II. H2BK120Ub also acts as a regulator of mRNA splicing: deubiquitination by USP49 is required for efficient cotranscriptional splicing of a large set of exons. Post-translationally, phosphorylated on Ser-15 (H2BS14ph) by STK4/MST1 during apoptosis; which facilitates apoptotic chromatin condensation. Also phosphorylated on Ser-15 in response to DNA double strand breaks (DSBs), and in correlation with somatic hypermutation and immunoglobulin class-switch recombination. Phosphorylation at Ser-37 (H2BS36ph) by AMPK in response to stress promotes transcription. In terms of processing, glcNAcylation at Ser-113 promotes monoubiquitination of Lys-121. It fluctuates in response to extracellular glucose, and associates with transcribed genes. ADP-ribosylated by PARP1 or PARP2 on Ser-7 (H2BS6ADPr) in response to DNA damage. H2BS6ADPr promotes recruitment of CHD1L. Mono-ADP-ribosylated on Glu-3 (H2BE2ADPr) by PARP3 in response to single-strand breaks. Poly ADP-ribosylation on Glu-36 (H2BE35ADPr) by PARP1 regulates adipogenesis: it inhibits phosphorylation at Ser-37 (H2BS36ph), thereby blocking expression of pro-adipogenetic genes. Post-translationally, crotonylation (Kcr) is specifically present in male germ cells and marks testis-specific genes in post-meiotic cells, including X-linked genes that escape sex chromosome inactivation in haploid cells. Crotonylation marks active promoters and enhancers and confers resistance to transcriptional repressors. It is also associated with post-meiotically activated genes on autosomes. In terms of processing, hydroxybutyrylation of histones is induced by starvation. Lactylated in macrophages by EP300/P300 by using lactoyl-CoA directly derived from endogenous or exogenous lactate, leading to stimulates gene transcription.

It is found in the nucleus. Its subcellular location is the chromosome. Functionally, core component of nucleosome. Nucleosomes wrap and compact DNA into chromatin, limiting DNA accessibility to the cellular machineries which require DNA as a template. Histones thereby play a central role in transcription regulation, DNA repair, DNA replication and chromosomal stability. DNA accessibility is regulated via a complex set of post-translational modifications of histones, also called histone code, and nucleosome remodeling. The protein is Histone H2B type 1-P (Hist1h2bp) of Mus musculus (Mouse).